The chain runs to 92 residues: Small ribosomal subunit protein uS19 (92 aa).

Belongs to the universal ribosomal protein uS19 family.

Protein S19 forms a complex with S13 that binds strongly to the 16S ribosomal RNA. The polypeptide is Small ribosomal subunit protein uS19 (Cereibacter sphaeroides (strain ATCC 17029 / ATH 2.4.9) (Rhodobacter sphaeroides)).